The primary structure comprises 46 residues: uncharacterized protein (46 aa).

This is an uncharacterized protein from Escherichia coli.